The chain runs to 546 residues: Sulfite oxidase, mitochondrial (546 aa).

The transit peptide at 1–80 directs the protein to the mitochondrion; the sequence is MLLQLYRSVV…YHEHRCRASQ (80 aa). Positions 83 to 162 constitute a Cytochrome b5 heme-binding domain; it reads PRMYSKEDVR…LAEYKIGELN (80 aa). Histidine 119 is a heme b binding site. Serine 124 bears the Phosphoserine mark. Heme b contacts are provided by histidine 144, glutamine 146, and histidine 148. The segment at 166 to 175 is hinge; sequence SMSPSVEASD. Positions 176 to 402 are moco domain; that stretch reads PYADDPIRHP…YSHWQRRDYK (227 aa). Mo-molybdopterin is bound by residues 216–220, cysteine 265, aspartate 323, histidine 362, arginine 367, and 378–380; these read FTRNH and HVK. The homodimerization stretch occupies residues 403-539; it reads GFSPSVDWDT…RGVLSNAWHR (137 aa).

As to quaternary structure, homodimer. Requires heme b as cofactor. Mo-molybdopterin serves as cofactor.

It is found in the mitochondrion intermembrane space. The catalysed reaction is sulfite + O2 + H2O = sulfate + H2O2. It participates in energy metabolism; sulfur metabolism. Its function is as follows. Catalyzes the oxidation of sulfite to sulfate, the terminal reaction in the oxidative degradation of sulfur-containing amino acids. The polypeptide is Sulfite oxidase, mitochondrial (Suox) (Mus musculus (Mouse)).